The sequence spans 277 residues: MQLMRFDKPIGTLLLLHPTLWALFAAAGGIPSSSILIIFILGVIVMRAAGCVINDYADRHIDGKVKRTSQRPLATGRVTTVEAKVLFFVLLIIAFLLDLSLNQYAFLLSFVAVALAVIYPFMKRFTHLPQVVLGMAFGWAIPMAYGAVIEDLPLTCWLLFLANILWTVAYDTQYAMVDRDDDLRIGVKSTAILFAQYDNKIIALLQFLSLILFILFGWLSEYHIGYFIVLALTSTLFIYQCWLTKQRVREQCFKAFLNNNYFGFGIFIAILVGIYGF.

Helical transmembrane passes span 24–44 (FAAAGGIPSSSILIIFILGVI), 81–101 (VEAKVLFFVLLIIAFLLDLSL), 102–122 (NQYAFLLSFVAVALAVIYPFM), 129–149 (PQVVLGMAFGWAIPMAYGAVI), 152–172 (LPLTCWLLFLANILWTVAYDT), 201–221 (IIALLQFLSLILFILFGWLSE), 224–244 (IGYFIVLALTSTLFIYQCWLT), and 255–275 (AFLNNNYFGFGIFIAILVGIY).

The protein belongs to the UbiA prenyltransferase family. Mg(2+) is required as a cofactor.

The protein localises to the cell inner membrane. It catalyses the reaction all-trans-octaprenyl diphosphate + 4-hydroxybenzoate = 4-hydroxy-3-(all-trans-octaprenyl)benzoate + diphosphate. It functions in the pathway cofactor biosynthesis; ubiquinone biosynthesis. Catalyzes the prenylation of para-hydroxybenzoate (PHB) with an all-trans polyprenyl group. Mediates the second step in the final reaction sequence of ubiquinone-8 (UQ-8) biosynthesis, which is the condensation of the polyisoprenoid side chain with PHB, generating the first membrane-bound Q intermediate 3-octaprenyl-4-hydroxybenzoate. The sequence is that of 4-hydroxybenzoate octaprenyltransferase from Haemophilus ducreyi (strain 35000HP / ATCC 700724).